The primary structure comprises 652 residues: DNA ligase (652 aa).

Residues 29 to 33, 78 to 79, and glutamate 107 each bind NAD(+); these read DSQYD and SL. Lysine 109 acts as the N6-AMP-lysine intermediate in catalysis. NAD(+) is bound by residues arginine 130, glutamate 164, lysine 278, and lysine 302. Residues cysteine 395, cysteine 398, cysteine 413, and cysteine 418 each contribute to the Zn(2+) site. Residues 577 to 652 enclose the BRCT domain; the sequence is STDAQLSGLT…IQDEDWLLNL (76 aa).

It belongs to the NAD-dependent DNA ligase family. LigA subfamily. Mg(2+) serves as cofactor. It depends on Mn(2+) as a cofactor.

It carries out the reaction NAD(+) + (deoxyribonucleotide)n-3'-hydroxyl + 5'-phospho-(deoxyribonucleotide)m = (deoxyribonucleotide)n+m + AMP + beta-nicotinamide D-nucleotide.. In terms of biological role, DNA ligase that catalyzes the formation of phosphodiester linkages between 5'-phosphoryl and 3'-hydroxyl groups in double-stranded DNA using NAD as a coenzyme and as the energy source for the reaction. It is essential for DNA replication and repair of damaged DNA. This is DNA ligase from Streptococcus agalactiae serotype III (strain NEM316).